The chain runs to 295 residues: Ankyrin repeat and SOCS box protein 17 (295 aa).

One copy of the ANK repeat lies at 146–176 (SGITPLFYVAQTRQSNIFKILLQYGILEREK). One can recognise an SOCS box domain in the interval 232-295 (LGRHPIISNW…RLQNYLNLEI (64 aa)).

Belongs to the ankyrin SOCS box (ASB) family. As to expression, specifically expressed in testis. Not detected in other tissues tested.

The protein operates within protein modification; protein ubiquitination. Its function is as follows. May be a substrate-recognition component of a SCF-like ECS (Elongin-Cullin-SOCS-box protein) E3 ubiquitin-protein ligase complex which mediates the ubiquitination and subsequent proteasomal degradation of target proteins. The sequence is that of Ankyrin repeat and SOCS box protein 17 (ASB17) from Homo sapiens (Human).